The chain runs to 172 residues: Adenine phosphoribosyltransferase (172 aa).

Belongs to the purine/pyrimidine phosphoribosyltransferase family. In terms of assembly, homodimer.

It localises to the cytoplasm. It carries out the reaction AMP + diphosphate = 5-phospho-alpha-D-ribose 1-diphosphate + adenine. It participates in purine metabolism; AMP biosynthesis via salvage pathway; AMP from adenine: step 1/1. Catalyzes a salvage reaction resulting in the formation of AMP, that is energically less costly than de novo synthesis. The chain is Adenine phosphoribosyltransferase from Herpetosiphon aurantiacus (strain ATCC 23779 / DSM 785 / 114-95).